A 201-amino-acid polypeptide reads, in one-letter code: Holliday junction branch migration complex subunit RuvA (201 aa).

A domain I region spans residues methionine 1–valine 63. Residues glutamate 64–serine 142 form a domain II region. The segment at glycine 143 to glutamate 153 is flexible linker. The segment at glutamate 153–arginine 201 is domain III.

Belongs to the RuvA family. As to quaternary structure, homotetramer. Forms an RuvA(8)-RuvB(12)-Holliday junction (HJ) complex. HJ DNA is sandwiched between 2 RuvA tetramers; dsDNA enters through RuvA and exits via RuvB. An RuvB hexamer assembles on each DNA strand where it exits the tetramer. Each RuvB hexamer is contacted by two RuvA subunits (via domain III) on 2 adjacent RuvB subunits; this complex drives branch migration. In the full resolvosome a probable DNA-RuvA(4)-RuvB(12)-RuvC(2) complex forms which resolves the HJ.

It is found in the cytoplasm. Functionally, the RuvA-RuvB-RuvC complex processes Holliday junction (HJ) DNA during genetic recombination and DNA repair, while the RuvA-RuvB complex plays an important role in the rescue of blocked DNA replication forks via replication fork reversal (RFR). RuvA specifically binds to HJ cruciform DNA, conferring on it an open structure. The RuvB hexamer acts as an ATP-dependent pump, pulling dsDNA into and through the RuvAB complex. HJ branch migration allows RuvC to scan DNA until it finds its consensus sequence, where it cleaves and resolves the cruciform DNA. The polypeptide is Holliday junction branch migration complex subunit RuvA (Cutibacterium acnes (strain DSM 16379 / KPA171202) (Propionibacterium acnes)).